Consider the following 154-residue polypeptide: Myoglobin (154 aa).

The Globin domain occupies 2 to 148 (GLSDQEWQQV…FRNDMASKYK (147 aa)). His65 provides a ligand contact to nitrite. Residue His65 participates in O2 binding. His94 is a binding site for heme b.

Belongs to the globin family. Monomeric.

The protein resides in the cytoplasm. The protein localises to the sarcoplasm. It catalyses the reaction Fe(III)-heme b-[protein] + nitric oxide + H2O = Fe(II)-heme b-[protein] + nitrite + 2 H(+). The catalysed reaction is H2O2 + AH2 = A + 2 H2O. Monomeric heme protein which primary function is to store oxygen and facilitate its diffusion within muscle tissues. Reversibly binds oxygen through a pentacoordinated heme iron and enables its timely and efficient release as needed during periods of heightened demand. Depending on the oxidative conditions of tissues and cells, and in addition to its ability to bind oxygen, it also has a nitrite reductase activity whereby it regulates the production of bioactive nitric oxide. Under stress conditions, like hypoxia and anoxia, it also protects cells against reactive oxygen species thanks to its pseudoperoxidase activity. This Anas poecilorhyncha (Indian spot-billed duck) protein is Myoglobin (MB).